The sequence spans 252 residues: MQICLMDETGATDGALSVLAARWGLEHDEDNPMALVLTPQYLELRKRDEPKLGGIFVDFVGGAMAHRRKFGGGRGEAVAKAVGIKGDYLPDVVDATAGLGRDAFVLASVGCRVRMLERNPVVAALLDDGLTRGYADADIGGWLQERLQLIHASSLTALTDITPRPQVVYLDPMFPHRQKSALVKKEMRVFQSLVGPDLDADGLLEPARQLATKRVVVKRPDYAPPLADVATPNAIVTKGHRFDIYAGTPLTE.

S-adenosyl-L-methionine is bound by residues 101-102, 117-118, 153-154, and D171; these read RD, ER, and SS.

The protein belongs to the methyltransferase superfamily. RsmJ family.

It localises to the cytoplasm. It catalyses the reaction guanosine(1516) in 16S rRNA + S-adenosyl-L-methionine = N(2)-methylguanosine(1516) in 16S rRNA + S-adenosyl-L-homocysteine + H(+). Specifically methylates the guanosine in position 1516 of 16S rRNA. The protein is Ribosomal RNA small subunit methyltransferase J of Salmonella paratyphi B (strain ATCC BAA-1250 / SPB7).